The chain runs to 232 residues: 2-C-methyl-D-erythritol 4-phosphate cytidylyltransferase (232 aa).

It belongs to the IspD/TarI cytidylyltransferase family. IspD subfamily.

The enzyme catalyses 2-C-methyl-D-erythritol 4-phosphate + CTP + H(+) = 4-CDP-2-C-methyl-D-erythritol + diphosphate. It participates in isoprenoid biosynthesis; isopentenyl diphosphate biosynthesis via DXP pathway; isopentenyl diphosphate from 1-deoxy-D-xylulose 5-phosphate: step 2/6. Its function is as follows. Catalyzes the formation of 4-diphosphocytidyl-2-C-methyl-D-erythritol from CTP and 2-C-methyl-D-erythritol 4-phosphate (MEP). This chain is 2-C-methyl-D-erythritol 4-phosphate cytidylyltransferase, found in Bacillus velezensis (strain DSM 23117 / BGSC 10A6 / LMG 26770 / FZB42) (Bacillus amyloliquefaciens subsp. plantarum).